Consider the following 273-residue polypeptide: Proteasome subunit beta (273 aa).

Polar residues predominate over residues 1 to 19 (MQESTANKVAANATSSFTE). The interval 1-23 (MQESTANKVAANATSSFTEHLQR) is disordered. A propeptide spans 1-50 (MQESTANKVAANATSSFTEHLQRDRPELLPFNRSGQGSATAAAPLQVPHA) (removed in mature form; by autocatalysis). The active-site Nucleophile is threonine 51.

Belongs to the peptidase T1B family. As to quaternary structure, the 20S proteasome core is composed of 14 alpha and 14 beta subunits that assemble into four stacked heptameric rings, resulting in a barrel-shaped structure. The two inner rings, each composed of seven catalytic beta subunits, are sandwiched by two outer rings, each composed of seven alpha subunits. The catalytic chamber with the active sites is on the inside of the barrel. Has a gated structure, the ends of the cylinder being occluded by the N-termini of the alpha-subunits. Is capped by the proteasome-associated ATPase, ARC.

The protein resides in the cytoplasm. It carries out the reaction Cleavage of peptide bonds with very broad specificity.. Its pathway is protein degradation; proteasomal Pup-dependent pathway. The formation of the proteasomal ATPase ARC-20S proteasome complex, likely via the docking of the C-termini of ARC into the intersubunit pockets in the alpha-rings, may trigger opening of the gate for substrate entry. Interconversion between the open-gate and close-gate conformations leads to a dynamic regulation of the 20S proteasome proteolysis activity. Component of the proteasome core, a large protease complex with broad specificity involved in protein degradation. This is Proteasome subunit beta from Pseudarthrobacter chlorophenolicus (strain ATCC 700700 / DSM 12829 / CIP 107037 / JCM 12360 / KCTC 9906 / NCIMB 13794 / A6) (Arthrobacter chlorophenolicus).